Consider the following 81-residue polypeptide: Cell division protein ZapB (81 aa).

Residues 5-81 are a coiled coil; sequence LEVFEKLEAK…QALLGRMEEV (77 aa). Position 10 is an N6-acetyllysine (Lys10). Residues 36–67 form a disordered region; it reads NNSLSQEVQNAQHQREELERENNHLKEQQNGW. The span at 37–47 shows a compositional bias: polar residues; that stretch reads NSLSQEVQNAQ. Residues 48–62 are compositionally biased toward basic and acidic residues; it reads HQREELERENNHLKE.

The protein belongs to the ZapB family. As to quaternary structure, homodimer. The ends of the coiled-coil dimer bind to each other, forming polymers. Interacts with FtsZ.

It localises to the cytoplasm. In terms of biological role, non-essential, abundant cell division factor that is required for proper Z-ring formation. It is recruited early to the divisome by direct interaction with FtsZ, stimulating Z-ring assembly and thereby promoting cell division earlier in the cell cycle. Its recruitment to the Z-ring requires functional FtsA or ZipA. The chain is Cell division protein ZapB from Shigella boydii serotype 4 (strain Sb227).